Reading from the N-terminus, the 170-residue chain is Large ribosomal subunit protein bL9 (170 aa).

Residues 149–170 (DGDNEDLDEDNAADENEDYSEE) form a disordered region.

This sequence belongs to the bacterial ribosomal protein bL9 family.

Functionally, binds to the 23S rRNA. The chain is Large ribosomal subunit protein bL9 from Psychrobacter cryohalolentis (strain ATCC BAA-1226 / DSM 17306 / VKM B-2378 / K5).